Consider the following 467-residue polypeptide: SVGFKAGVKEYKLTYYTPEYETKDTDILAAFRVSPQPGVPPEEAGAAVAAESSTGTWTTVWTDGLTSLDRYKGRCYHIDPVPGEEDQYICYVAYPLDLFEEGSVTNMFTSIVGNVFGFKALRALRLEDLRIPPAYVKTFQGPPHGIQVERDKLNKYGRPLLGCTIKPKLGLSAKNYGRAVYECLRGGLDFTKDDENVNSQPFMRWRDRFLFCAEAIYKSQAETGEIKGHYLNATAGNXEEMIKRAVFARELGVPIVMHDYLTGGFTANTSLASYCRDNGLLLHIHRAMHAVIDRQKNHGIHFRVLAKALRMSGGDHIHSGTVVGKLEGERNITLGFVDLLRDDYIEKDRSRGIFFTQDWVSLPGVLPVASGGIHVWHMRALVEIFGDDSVLQFGGGTLGHPWGNAPGAVANRVSLEACVQARNEGRDLAREGNEIVREACKWSPELAAACEVWKEIKFEFKEVDTLD.

Lysine 5 carries the post-translational modification N6,N6,N6-trimethyllysine. Residues asparagine 114 and threonine 164 each coordinate substrate. Lysine 166 acts as the Proton acceptor in catalysis. Lysine 168 lines the substrate pocket. Positions 192, 194, and 195 each coordinate Mg(2+). Residue lysine 192 is modified to N6-carboxylysine. Histidine 285 functions as the Proton acceptor in the catalytic mechanism. The substrate site is built by arginine 286, histidine 318, and serine 370.

Belongs to the RuBisCO large chain family. Type I subfamily. As to quaternary structure, heterohexadecamer of 8 large chains and 8 small chains; disulfide-linked. The disulfide link is formed within the large subunit homodimers. Mg(2+) serves as cofactor. In terms of processing, the disulfide bond which can form in the large chain dimeric partners within the hexadecamer appears to be associated with oxidative stress and protein turnover.

It is found in the plastid. The protein localises to the chloroplast. It catalyses the reaction 2 (2R)-3-phosphoglycerate + 2 H(+) = D-ribulose 1,5-bisphosphate + CO2 + H2O. It carries out the reaction D-ribulose 1,5-bisphosphate + O2 = 2-phosphoglycolate + (2R)-3-phosphoglycerate + 2 H(+). Functionally, ruBisCO catalyzes two reactions: the carboxylation of D-ribulose 1,5-bisphosphate, the primary event in carbon dioxide fixation, as well as the oxidative fragmentation of the pentose substrate in the photorespiration process. Both reactions occur simultaneously and in competition at the same active site. The sequence is that of Ribulose bisphosphate carboxylase large chain from Eriodictyon californicum (California yerba santa).